The chain runs to 122 residues: Small ribosomal subunit protein uS13 (122 aa).

The segment at 95-122 (GLPVRGQRTRTNARTRKGPRKTVAKKKK) is disordered.

Belongs to the universal ribosomal protein uS13 family. In terms of assembly, part of the 30S ribosomal subunit. Forms a loose heterodimer with protein S19. Forms two bridges to the 50S subunit in the 70S ribosome.

Its function is as follows. Located at the top of the head of the 30S subunit, it contacts several helices of the 16S rRNA. In the 70S ribosome it contacts the 23S rRNA (bridge B1a) and protein L5 of the 50S subunit (bridge B1b), connecting the 2 subunits; these bridges are implicated in subunit movement. Contacts the tRNAs in the A and P-sites. The polypeptide is Small ribosomal subunit protein uS13 (Thermoanaerobacter pseudethanolicus (strain ATCC 33223 / 39E) (Clostridium thermohydrosulfuricum)).